Here is a 120-residue protein sequence, read N- to C-terminus: MSVSKDQILDAIAEMSVMDVVALIEAMEEKFGVTAAAGMVAGPAAEAVEEKTEFDVILTGAGANKVSAIKAVRSATGLGLKEAKALVEAAPTPVKEGISKEEAEALAKDLTEAGAEVEVK.

It belongs to the bacterial ribosomal protein bL12 family. Homodimer. Part of the ribosomal stalk of the 50S ribosomal subunit. Forms a multimeric L10(L12)X complex, where L10 forms an elongated spine to which 2 to 4 L12 dimers bind in a sequential fashion. Binds GTP-bound translation factors.

Functionally, forms part of the ribosomal stalk which helps the ribosome interact with GTP-bound translation factors. Is thus essential for accurate translation. The sequence is that of Large ribosomal subunit protein bL12 from Pseudoalteromonas translucida (strain TAC 125).